The sequence spans 323 residues: 4-hydroxy-3-methylbut-2-enyl diphosphate reductase (323 aa).

C12 provides a ligand contact to [4Fe-4S] cluster. Positions 43 and 81 each coordinate (2E)-4-hydroxy-3-methylbut-2-enyl diphosphate. 2 residues coordinate dimethylallyl diphosphate: H43 and H81. Residues H43 and H81 each coordinate isopentenyl diphosphate. C103 contacts [4Fe-4S] cluster. H131 is a (2E)-4-hydroxy-3-methylbut-2-enyl diphosphate binding site. H131 is a dimethylallyl diphosphate binding site. Residue H131 coordinates isopentenyl diphosphate. E133 serves as the catalytic Proton donor. Residue T170 coordinates (2E)-4-hydroxy-3-methylbut-2-enyl diphosphate. Residue C198 coordinates [4Fe-4S] cluster. Residues S226, N228, and S271 each coordinate (2E)-4-hydroxy-3-methylbut-2-enyl diphosphate. 3 residues coordinate dimethylallyl diphosphate: S226, N228, and S271. Isopentenyl diphosphate contacts are provided by S226, N228, and S271.

Belongs to the IspH family. [4Fe-4S] cluster serves as cofactor.

It catalyses the reaction isopentenyl diphosphate + 2 oxidized [2Fe-2S]-[ferredoxin] + H2O = (2E)-4-hydroxy-3-methylbut-2-enyl diphosphate + 2 reduced [2Fe-2S]-[ferredoxin] + 2 H(+). It carries out the reaction dimethylallyl diphosphate + 2 oxidized [2Fe-2S]-[ferredoxin] + H2O = (2E)-4-hydroxy-3-methylbut-2-enyl diphosphate + 2 reduced [2Fe-2S]-[ferredoxin] + 2 H(+). It participates in isoprenoid biosynthesis; dimethylallyl diphosphate biosynthesis; dimethylallyl diphosphate from (2E)-4-hydroxy-3-methylbutenyl diphosphate: step 1/1. It functions in the pathway isoprenoid biosynthesis; isopentenyl diphosphate biosynthesis via DXP pathway; isopentenyl diphosphate from 1-deoxy-D-xylulose 5-phosphate: step 6/6. In terms of biological role, catalyzes the conversion of 1-hydroxy-2-methyl-2-(E)-butenyl 4-diphosphate (HMBPP) into a mixture of isopentenyl diphosphate (IPP) and dimethylallyl diphosphate (DMAPP). Acts in the terminal step of the DOXP/MEP pathway for isoprenoid precursor biosynthesis. This Lysinibacillus sphaericus (strain C3-41) protein is 4-hydroxy-3-methylbut-2-enyl diphosphate reductase.